Here is a 785-residue protein sequence, read N- to C-terminus: 1-phosphatidylinositol 4,5-bisphosphate phosphodiesterase delta-3 (785 aa).

Residues 1-43 (MLCGGWKRSRRSPEESRVSAQVAAPLAFPPSPASSDSSTKRPG) are disordered. Positions 65-168 (SRLLKIRSRT…WVRGLAKLRA (104 aa)) constitute a PH domain. The tract at residues 69–97 (KIRSRTWHKERLYRLQEDGLSVWFQRRIP) is substrate binding. Serine 101 is subject to Phosphoserine. 3 consecutive EF-hand domains span residues 178–213 (RLDH…VNVD), 214–249 (MNDM…LLKR), and 246–281 (LLKR…QGED). Ca(2+) is bound by residues aspartate 191, aspartate 193, aspartate 195, lysine 197, glutamate 202, aspartate 227, serine 229, asparagine 231, arginine 233, and glutamate 238. Positions 333–478 (QDMGQPLAHY…LKGRILVKGK (146 aa)) constitute a PI-PLC X-box domain. Histidine 348 is a catalytic residue. The Ca(2+) site is built by asparagine 349, glutamate 378, and aspartate 380. Histidine 393 is an active-site residue. Glutamate 427 provides a ligand contact to Ca(2+). Substrate-binding residues include lysine 476 and lysine 478. Positions 484–493 (RSEDGRILSD) are enriched in basic and acidic residues. The disordered stretch occupies residues 484-517 (RSEDGRILSDREEEEEEEEEAEEALEAAEQRSRA). Serine 492 carries the post-translational modification Phosphoserine. Over residues 494–509 (REEEEEEEEEAEEALE) the composition is skewed to acidic residues. The region spanning 524-640 (LSALAVYCCA…GYVLKPAYLR (117 aa)) is the PI-PLC Y-box domain. A substrate-binding site is contributed by serine 553. Serine 569 is modified (phosphoserine). Arginine 580 contacts substrate. The region spanning 636–765 (PAYLRQLNTT…QGYRHIHLLS (130 aa)) is the C2 domain. The Ca(2+) site is built by isoleucine 679, aspartate 681, asparagine 705, aspartate 734, tyrosine 735, and aspartate 736.

Ca(2+) serves as cofactor. Expressed in cerebellum and cerebral cortex.

Its subcellular location is the membrane. It localises to the cytoplasm. It is found in the cleavage furrow. It catalyses the reaction a 1,2-diacyl-sn-glycero-3-phospho-(1D-myo-inositol-4,5-bisphosphate) + H2O = 1D-myo-inositol 1,4,5-trisphosphate + a 1,2-diacyl-sn-glycerol + H(+). With respect to regulation, strongly activated by phosphatidic acid. Inhibited by phosphatidylethanolamine (PtdEtn), phosphatidylcholine (PtdCho), sphingomyelin and phosphatidylserine (PtdSer). Its function is as follows. Hydrolyzes the phosphatidylinositol 4,5-bisphosphate (PIP2) to generate 2 second messenger molecules diacylglycerol (DAG) and inositol 1,4,5-trisphosphate (IP3). DAG mediates the activation of protein kinase C (PKC), while IP3 releases Ca(2+) from intracellular stores. Essential for trophoblast and placental development. May participate in cytokinesis by hydrolyzing PIP2 at the cleavage furrow. Regulates neurite outgrowth through the inhibition of RhoA/Rho kinase signaling. The chain is 1-phosphatidylinositol 4,5-bisphosphate phosphodiesterase delta-3 from Mus musculus (Mouse).